We begin with the raw amino-acid sequence, 415 residues long: Gamma-glutamyl phosphate reductase (415 aa).

Belongs to the gamma-glutamyl phosphate reductase family.

The protein resides in the cytoplasm. The enzyme catalyses L-glutamate 5-semialdehyde + phosphate + NADP(+) = L-glutamyl 5-phosphate + NADPH + H(+). Its pathway is amino-acid biosynthesis; L-proline biosynthesis; L-glutamate 5-semialdehyde from L-glutamate: step 2/2. In terms of biological role, catalyzes the NADPH-dependent reduction of L-glutamate 5-phosphate into L-glutamate 5-semialdehyde and phosphate. The product spontaneously undergoes cyclization to form 1-pyrroline-5-carboxylate. The sequence is that of Gamma-glutamyl phosphate reductase from Dictyoglomus thermophilum (strain ATCC 35947 / DSM 3960 / H-6-12).